Consider the following 3135-residue polypeptide: Beauvericin nonribosomal cyclodepsipeptide synthetase BEA1 (3135 aa).

The tract at residues 70–458 (HVAYEISNDI…QRLRGSPDKL (389 aa)) is condensation 1. Positions 196-228 (LSNRPYTPESSDPEDDGLSLTPTDGSKTPETEG) are disordered. The interval 499 to 896 (SLSPSKVAIC…GRMDSQVKIR (398 aa)) is adenylation 1. Residues 1021–1097 (STTTSSQSKL…GLEAIVNGSA (77 aa)) enclose the Carrier 1 domain. At Ser1058 the chain carries O-(pantetheine 4'-phosphoryl)serine. The interval 1115–1542 (SYSQGRLWFL…NIPISVLPLT (428 aa)) is condensation 2. Residues 1571-1974 (FRTQVAAYPD…GRMDTQFKIR (404 aa)) form an adenylation 2 region. The tract at residues 2042–2182 (MYADIGDIDP…FPSPEYLAQV (141 aa)) is S-adenosyl-L-methionine-dependent N-methyltransferase. 2 Carrier domains span residues 2509–2583 (VPIS…REGL) and 2603–2677 (APRT…ESTD). Residues Ser2543 and Ser2637 each carry the O-(pantetheine 4'-phosphoryl)serine modification. Positions 2721 to 3127 (QDMYQSTQMQ…QYFLEEVCNT (407 aa)) are condensation 3.

This sequence belongs to the NRP synthetase family.

It carries out the reaction 3 (R)-2-hydroxy-3-methylbutanoate + 3 L-phenylalanine + 3 S-adenosyl-L-methionine + 6 ATP = beauvericin + 6 AMP + 3 S-adenosyl-L-homocysteine + 6 diphosphate + 6 H(+). Its function is as follows. Beauvericin nonribosomal cyclodepsipeptide synthetase; part of the gene cluster that mediates the biosynthesis of beauvericin (BEA), a non-ribosomal cyclic hexadepsipeptide that shows antibiotic, antifungal, insecticidal, and cancer cell antiproliferative and antihaptotactic activity. Ketoisovalerate reductase BEA2 catalyzes the NADPH-specific reduction of ketoisovaleric acid to hydroxyisovalerate, a precursor for beauvericin biosynthesis. The nonribosomal cyclodepsipeptide synthetase BEA1 then catalyzes the formation of beauvericin via condensation and cyclization of 3 dipeptidol monomers, each composed of one unit of hydroxyisovalerate and one unit of N-methyl-phenylalanine. The protein is Beauvericin nonribosomal cyclodepsipeptide synthetase BEA1 of Gibberella fujikuroi (strain CBS 195.34 / IMI 58289 / NRRL A-6831) (Bakanae and foot rot disease fungus).